The chain runs to 555 residues: Urocanate hydratase (555 aa).

NAD(+) contacts are provided by residues 53 to 54 (GG), glutamine 131, 177 to 179 (GMG), glutamate 197, arginine 202, 243 to 244 (NA), 264 to 268 (QTSAH), 274 to 275 (YL), and tyrosine 323. The active site involves cysteine 411. Glycine 493 lines the NAD(+) pocket.

This sequence belongs to the urocanase family. NAD(+) serves as cofactor.

The protein localises to the cytoplasm. It carries out the reaction 4-imidazolone-5-propanoate = trans-urocanate + H2O. It functions in the pathway amino-acid degradation; L-histidine degradation into L-glutamate; N-formimidoyl-L-glutamate from L-histidine: step 2/3. Its function is as follows. Catalyzes the conversion of urocanate to 4-imidazolone-5-propionate. This Maricaulis maris (strain MCS10) (Caulobacter maris) protein is Urocanate hydratase.